A 220-amino-acid chain; its full sequence is Ribose-5-phosphate isomerase A (220 aa).

Substrate contacts are provided by residues threonine 25–threonine 28, aspartate 80–aspartate 83, and lysine 93–glycine 96. The active-site Proton acceptor is the glutamate 102. Lysine 120 lines the substrate pocket.

Belongs to the ribose 5-phosphate isomerase family. In terms of assembly, homodimer.

It catalyses the reaction aldehydo-D-ribose 5-phosphate = D-ribulose 5-phosphate. It participates in carbohydrate degradation; pentose phosphate pathway; D-ribose 5-phosphate from D-ribulose 5-phosphate (non-oxidative stage): step 1/1. Catalyzes the reversible conversion of ribose-5-phosphate to ribulose 5-phosphate. The protein is Ribose-5-phosphate isomerase A of Bacillus anthracis.